The primary structure comprises 273 residues: Large ribosomal subunit protein uL2 (273 aa).

2 disordered regions span residues proline 32 to histidine 53 and arginine 221 to lysine 273. The segment covering lysine 39–arginine 48 has biased composition (low complexity).

Belongs to the universal ribosomal protein uL2 family. Part of the 50S ribosomal subunit. Forms a bridge to the 30S subunit in the 70S ribosome.

In terms of biological role, one of the primary rRNA binding proteins. Required for association of the 30S and 50S subunits to form the 70S ribosome, for tRNA binding and peptide bond formation. It has been suggested to have peptidyltransferase activity; this is somewhat controversial. Makes several contacts with the 16S rRNA in the 70S ribosome. This chain is Large ribosomal subunit protein uL2, found in Erwinia tasmaniensis (strain DSM 17950 / CFBP 7177 / CIP 109463 / NCPPB 4357 / Et1/99).